Reading from the N-terminus, the 661-residue chain is Chermesin D/asnovolin J monooxidase nvfH (661 aa).

N-linked (GlcNAc...) asparagine glycosylation occurs at asparagine 12. A helical transmembrane segment spans residues 89–111 (VLIIGAGYGGLLFAVRIIQTGAF). FAD is bound by residues 128–131 (TWYW), 140–141 (DV), and tyrosine 146. Residue 138-140 (MCD) participates in NADP(+) binding. Residues 286–292 (TGATAIQ) and 309–310 (RT) contribute to the NADP(+) site. Residues asparagine 382 and asparagine 538 are each glycosylated (N-linked (GlcNAc...) asparagine).

Belongs to the FAD-binding monooxygenase family. It depends on FAD as a cofactor.

The protein localises to the membrane. The enzyme catalyses chermesin D + AH2 + O2 = asnovolin I + A + H2O. The catalysed reaction is asnovolin J + AH2 + O2 = asnovolin A + A + H2O. It functions in the pathway secondary metabolite biosynthesis; terpenoid biosynthesis. Its function is as follows. Chermesin D/asnovolin J monooxidase; part of the gene cluster that mediates the biosynthesis of novofumigatonin, a heavily oxygenated meroterpenoid containing a unique orthoester moiety. The first step of the pathway is the synthesis of 3,5-dimethylorsellinic acid (DMOA) by the polyketide synthase nvfA via condensation of one acetyl-CoA starter unit with 3 malonyl-CoA units and 2 methylations. DMOA is then converted to farnesyl-DMOA by the farnesyltransferase nvfB. Epoxydation by FAD-dependent monooxygenase nvfK, followed by a protonation-initiated cyclization catalyzed by the terpene cyclase nvfL leads to the production of asnavolin H. The short chain dehydrogenase nvfC then as a 3-OH dehydrogenase of asnovolin H to yield chemesin D. There are two branches to synthesize asnovolin A from chemesin D. In one branch, chemesin D undergoes Baeyer-Villiger oxidation by nvfH, methylation by nvfJ, and enoyl reduction by the nvfM D enoylreductase that reduces the double bond between C-5'and C-6', to form respectively asnovolin I, asnovolin K, and asnovolin A. In the other branch, the methylation precedes the Baeyer-Villiger oxidation and the enoyl reduction to yield asnovolin A via the asnovolin J intermediate. Asnovolin A is further converted to fumigatonoid A by the Fe(II)/2-oxoglutarate-dependent dioxygenase nvfI that catalyzes an endoperoxidation reaction. The alpha/beta hydrolase nvfD then acts as an epimerase that converts fumigatonoid A to its C-5' epimer, which then undergoes spontaneous or nvfD-catalyzed lactonization. The following step utilizes the ketoreductase nvfG to produce fumigatonoid B. The dioxygenase nvfE further converts fumigatonoid B into fumigatonoid C. Finally the Fe(II)/2-oxoglutarate-dependent dioxygenase nvfF catalyzes two rounds of oxidation to transform fumigatonoid C into the end product, novofumigatonin A. The polypeptide is Chermesin D/asnovolin J monooxidase nvfH (Aspergillus novofumigatus (strain IBT 16806)).